The following is a 156-amino-acid chain: Protein E6 (156 aa).

2 zinc fingers span residues 40-76 (CNFCGRFLDYLEVCEFDYKKLTLIWKDYSVYACCRLC) and 113-149 (CHTCLSFLDIIEKLDSCGRGLPFHKVRNAWKGVCRQC).

The protein belongs to the papillomaviridae E6 protein family. As to quaternary structure, forms homodimers. Interacts with ubiquitin-protein ligase UBE3A/E6-AP; this interaction stimulates UBE3A ubiquitin activity. Interacts with host BAK1.

The protein localises to the host cytoplasm. Its subcellular location is the host nucleus. Plays a major role in the induction and maintenance of cellular transformation. E6 associates with host UBE3A/E6-AP ubiquitin-protein ligase and modulates its activity. Protects host keratinocytes from apoptosis by mediating the degradation of host BAK1. May also inhibit host immune response. This chain is Protein E6, found in Homo sapiens (Human).